The following is a 142-amino-acid chain: Peptide methionine sulfoxide reductase MsrB (142 aa).

Residues 13-135 (EKDWKVELSE…NSLSMTFKGE (123 aa)) enclose the MsrB domain. Zn(2+)-binding residues include cysteine 52, cysteine 55, cysteine 101, and cysteine 104. Cysteine 124 serves as the catalytic Nucleophile.

Belongs to the MsrB Met sulfoxide reductase family. Zn(2+) serves as cofactor.

It carries out the reaction L-methionyl-[protein] + [thioredoxin]-disulfide + H2O = L-methionyl-(R)-S-oxide-[protein] + [thioredoxin]-dithiol. The protein is Peptide methionine sulfoxide reductase MsrB of Alteromonas mediterranea (strain DSM 17117 / CIP 110805 / LMG 28347 / Deep ecotype).